Here is a 258-residue protein sequence, read N- to C-terminus: Glutamate racemase (258 aa).

Substrate is bound by residues 12–13 and 44–45; these read DS and YG. Cys75 (proton donor/acceptor) is an active-site residue. Position 76-77 (76-77) interacts with substrate; the sequence is NT. Cys186 functions as the Proton donor/acceptor in the catalytic mechanism. 187 to 188 is a binding site for substrate; that stretch reads TH.

The protein belongs to the aspartate/glutamate racemases family.

It catalyses the reaction L-glutamate = D-glutamate. It functions in the pathway cell wall biogenesis; peptidoglycan biosynthesis. Functionally, provides the (R)-glutamate required for cell wall biosynthesis. In Clostridium botulinum (strain Alaska E43 / Type E3), this protein is Glutamate racemase.